A 90-amino-acid polypeptide reads, in one-letter code: MSGTVAAPEGITDPPIDELLTAADSKYALVIYAAKRARQINAYYAQLNEGLLEYVGPLVETRNQEKPLSIAMREINKGLLTVEATESTED.

Belongs to the RNA polymerase subunit omega family. As to quaternary structure, the RNAP catalytic core consists of 2 alpha, 1 beta, 1 beta' and 1 omega subunit. When a sigma factor is associated with the core the holoenzyme is formed, which can initiate transcription.

The catalysed reaction is RNA(n) + a ribonucleoside 5'-triphosphate = RNA(n+1) + diphosphate. Functionally, promotes RNA polymerase assembly. Latches the N- and C-terminal regions of the beta' subunit thereby facilitating its interaction with the beta and alpha subunits. The polypeptide is DNA-directed RNA polymerase subunit omega (Beutenbergia cavernae (strain ATCC BAA-8 / DSM 12333 / CCUG 43141 / JCM 11478 / NBRC 16432 / NCIMB 13614 / HKI 0122)).